The chain runs to 289 residues: Acetyl-coenzyme A carboxylase carboxyl transferase subunit beta (289 aa).

A CoA carboxyltransferase N-terminal domain is found at 30–289; it reads IWRECPRCHS…SNAWRANHDK (260 aa). 4 residues coordinate Zn(2+): Cys-34, Cys-37, Cys-52, and Cys-55. The segment at 34-55 adopts a C4-type zinc-finger fold; sequence CPRCHSRFYYRRFGNFDVCPEC.

Belongs to the AccD/PCCB family. Acetyl-CoA carboxylase is a heterohexamer composed of biotin carboxyl carrier protein (AccB), biotin carboxylase (AccC) and two subunits each of ACCase subunit alpha (AccA) and ACCase subunit beta (AccD). Zn(2+) is required as a cofactor.

It localises to the cytoplasm. The enzyme catalyses N(6)-carboxybiotinyl-L-lysyl-[protein] + acetyl-CoA = N(6)-biotinyl-L-lysyl-[protein] + malonyl-CoA. It functions in the pathway lipid metabolism; malonyl-CoA biosynthesis; malonyl-CoA from acetyl-CoA: step 1/1. Its function is as follows. Component of the acetyl coenzyme A carboxylase (ACC) complex. Biotin carboxylase (BC) catalyzes the carboxylation of biotin on its carrier protein (BCCP) and then the CO(2) group is transferred by the transcarboxylase to acetyl-CoA to form malonyl-CoA. This chain is Acetyl-coenzyme A carboxylase carboxyl transferase subunit beta, found in Oenococcus oeni (strain ATCC BAA-331 / PSU-1).